A 494-amino-acid chain; its full sequence is Aspartyl/glutamyl-tRNA(Asn/Gln) amidotransferase subunit B (494 aa).

This sequence belongs to the GatB/GatE family. GatB subfamily. Heterotrimer of A, B and C subunits.

It carries out the reaction L-glutamyl-tRNA(Gln) + L-glutamine + ATP + H2O = L-glutaminyl-tRNA(Gln) + L-glutamate + ADP + phosphate + H(+). The enzyme catalyses L-aspartyl-tRNA(Asn) + L-glutamine + ATP + H2O = L-asparaginyl-tRNA(Asn) + L-glutamate + ADP + phosphate + 2 H(+). Allows the formation of correctly charged Asn-tRNA(Asn) or Gln-tRNA(Gln) through the transamidation of misacylated Asp-tRNA(Asn) or Glu-tRNA(Gln) in organisms which lack either or both of asparaginyl-tRNA or glutaminyl-tRNA synthetases. The reaction takes place in the presence of glutamine and ATP through an activated phospho-Asp-tRNA(Asn) or phospho-Glu-tRNA(Gln). This chain is Aspartyl/glutamyl-tRNA(Asn/Gln) amidotransferase subunit B, found in Nitrobacter winogradskyi (strain ATCC 25391 / DSM 10237 / CIP 104748 / NCIMB 11846 / Nb-255).